The primary structure comprises 194 residues: RNA polymerase II subunit A C-terminal domain phosphatase SSU72 like protein 3 (194 aa).

It belongs to the SSU72 phosphatase family.

It is found in the nucleus. The enzyme catalyses O-phospho-L-seryl-[protein] + H2O = L-seryl-[protein] + phosphate. It carries out the reaction O-phospho-L-threonyl-[protein] + H2O = L-threonyl-[protein] + phosphate. In terms of biological role, protein phosphatase that catalyzes the dephosphorylation of the C-terminal domain of RNA polymerase II. Plays a role in RNA processing and termination. The protein is RNA polymerase II subunit A C-terminal domain phosphatase SSU72 like protein 3 of Homo sapiens (Human).